Reading from the N-terminus, the 551-residue chain is Probable CoA ligase CCL5 (551 aa).

Residues 204 to 212 (SSGTTGASK), 345 to 350 (QGYGLT), D431, 443 to 446 (VVDR), and K537 contribute to the ATP site. Residues 274-345 (EIHEMLSAIE…ENYPTVSILQ (72 aa)) are SBD1. The SBD2 stretch occupies residues 346-410 (GYGLTESTGI…LRGPTIMKGY (65 aa)).

Belongs to the ATP-dependent AMP-binding enzyme family. In terms of tissue distribution, mostly expressed at low levels in glandular trichomes (lupulin glands) after flowering, and, to a lower extent, in stems, leaves, cones and flowers.

The protein localises to the cytoplasm. It localises to the cytosol. This Humulus lupulus (European hop) protein is Probable CoA ligase CCL5.